The following is a 332-amino-acid chain: L-lactate dehydrogenase A chain (332 aa).

NAD(+) is bound by residues 29 to 57 and R99; that span reads GMVG…MEDK. Positions 106, 138, and 169 each coordinate substrate. N138 serves as a coordination point for NAD(+). H193 functions as the Proton acceptor in the catalytic mechanism. T248 lines the substrate pocket.

This sequence belongs to the LDH/MDH superfamily. LDH family. In terms of assembly, homotetramer.

Its subcellular location is the cytoplasm. It catalyses the reaction (S)-lactate + NAD(+) = pyruvate + NADH + H(+). It functions in the pathway fermentation; pyruvate fermentation to lactate; (S)-lactate from pyruvate: step 1/1. Its function is as follows. Interconverts simultaneously and stereospecifically pyruvate and lactate with concomitant interconversion of NADH and NAD(+). The polypeptide is L-lactate dehydrogenase A chain (ldha) (Sphyraena argentea (Pacific barracuda)).